Here is a 275-residue protein sequence, read N- to C-terminus: Formamidopyrimidine-DNA glycosylase (275 aa).

Catalysis depends on Pro-2, which acts as the Schiff-base intermediate with DNA. Glu-3 (proton donor) is an active-site residue. The active-site Proton donor; for beta-elimination activity is Lys-58. DNA contacts are provided by His-91, Arg-109, and Arg-154. The FPG-type zinc finger occupies 240–274 (AVYERAGLPCRVCGTPIRRLVQGQRATYYCPSCQK). Arg-264 acts as the Proton donor; for delta-elimination activity in catalysis.

The protein belongs to the FPG family. In terms of assembly, monomer. The cofactor is Zn(2+).

It catalyses the reaction Hydrolysis of DNA containing ring-opened 7-methylguanine residues, releasing 2,6-diamino-4-hydroxy-5-(N-methyl)formamidopyrimidine.. The catalysed reaction is 2'-deoxyribonucleotide-(2'-deoxyribose 5'-phosphate)-2'-deoxyribonucleotide-DNA = a 3'-end 2'-deoxyribonucleotide-(2,3-dehydro-2,3-deoxyribose 5'-phosphate)-DNA + a 5'-end 5'-phospho-2'-deoxyribonucleoside-DNA + H(+). Its function is as follows. Involved in base excision repair of DNA damaged by oxidation or by mutagenic agents. Acts as a DNA glycosylase that recognizes and removes damaged bases. Has a preference for oxidized purines, such as 7,8-dihydro-8-oxoguanine (8-oxoG). Has AP (apurinic/apyrimidinic) lyase activity and introduces nicks in the DNA strand. Cleaves the DNA backbone by beta-delta elimination to generate a single-strand break at the site of the removed base with both 3'- and 5'-phosphates. The polypeptide is Formamidopyrimidine-DNA glycosylase (Bordetella petrii (strain ATCC BAA-461 / DSM 12804 / CCUG 43448)).